The sequence spans 330 residues: Spondin-2 (330 aa).

An N-terminal signal peptide occupies residues 1-25 (MENVSFSLDRTLWVFLLAMLGSTAG). One can recognise a Spondin domain in the interval 30-220 (GESVCTARPL…EITASSPSHP (191 aa)). A disulfide bridge connects residues C34 and C170. E140 provides a ligand contact to a divalent metal cation. Ca(2+) contacts are provided by D159, D187, and D191. Residues 276–330 (DCEVSLWSSWGLCGGPCGKLGAKSRTRYVRVQPANNGTPCPELEEEAECAPDNCV) form the TSP type-1 domain. W282 is a glycosylation site (C-linked (Man) tryptophan).

In terms of assembly, monomer. Interacts with integrin. In terms of tissue distribution, abundantly expressed in the developing hippocampus.

The protein resides in the secreted. The protein localises to the extracellular space. Its subcellular location is the extracellular matrix. In terms of biological role, cell adhesion protein that promotes adhesion and outgrowth of hippocampal embryonic neurons. Binds directly to bacteria and their components and functions as an opsonin for macrophage phagocytosis of bacteria. Essential in the initiation of the innate immune response and represents a unique pattern-recognition molecule in the ECM for microbial pathogens. This chain is Spondin-2 (Spon2), found in Rattus norvegicus (Rat).